The primary structure comprises 89 residues: Small ribosomal subunit protein uS15 (89 aa).

This sequence belongs to the universal ribosomal protein uS15 family. As to quaternary structure, part of the 30S ribosomal subunit. Forms a bridge to the 50S subunit in the 70S ribosome, contacting the 23S rRNA.

Its function is as follows. One of the primary rRNA binding proteins, it binds directly to 16S rRNA where it helps nucleate assembly of the platform of the 30S subunit by binding and bridging several RNA helices of the 16S rRNA. Forms an intersubunit bridge (bridge B4) with the 23S rRNA of the 50S subunit in the ribosome. This chain is Small ribosomal subunit protein uS15, found in Micrococcus luteus (strain ATCC 4698 / DSM 20030 / JCM 1464 / CCM 169 / CCUG 5858 / IAM 1056 / NBRC 3333 / NCIMB 9278 / NCTC 2665 / VKM Ac-2230) (Micrococcus lysodeikticus).